The following is a 567-amino-acid chain: Methionine--tRNA ligase (567 aa).

The 'HIGH' region signature appears at 11–21 (PYVQTVPHLGN). Positions 143, 146, 156, and 159 each coordinate Zn(2+). Positions 331 to 335 (KFSKS) match the 'KMSKS' region motif. Lys-334 contributes to the ATP binding site.

Belongs to the class-I aminoacyl-tRNA synthetase family. MetG type 1 subfamily. The cofactor is Zn(2+).

The protein resides in the cytoplasm. It carries out the reaction tRNA(Met) + L-methionine + ATP = L-methionyl-tRNA(Met) + AMP + diphosphate. Is required not only for elongation of protein synthesis but also for the initiation of all mRNA translation through initiator tRNA(fMet) aminoacylation. The chain is Methionine--tRNA ligase from Pyrobaculum islandicum (strain DSM 4184 / JCM 9189 / GEO3).